We begin with the raw amino-acid sequence, 363 residues long: p21-activated protein kinase-interacting protein 1-like (363 aa).

5 WD repeats span residues 38–75, 78–116, 119–158, 200–238, and 241–282; these read AHTASVSVLAVNNRFVATGSRDETIQIYDMKKKVEHGA, HHNGTITCLEFYGNTHLLSGAEDGLICVWNTKKWECQQT, AHKGQVLSLSIHPSGKLALSVGTDKTLRTWNLVEGRSAFI, NNPKRISSAQFITDALIAVAGDEEVIRLYDTASQKCVCE, and AHEN…VQTS. The segment at 309 to 363 is disordered; sequence KEKSNTAVTASAVKDCDRPKKKKAQNETTDKEASETQVVHKKRKPETKQKKKKPS. Residues 322-342 show a composition bias toward basic and acidic residues; the sequence is KDCDRPKKKKAQNETTDKEAS. The segment covering 347 to 363 has biased composition (basic residues); it reads VHKKRKPETKQKKKKPS.

Its subcellular location is the nucleus. It localises to the nucleolus. Its function is as follows. Negatively regulates the PAK1 kinase. PAK1 is a member of the PAK kinase family, which has been shown to play a positive role in the regulation of signaling pathways involving MAPK8 and RELA. PAK1 exists as an inactive homodimer, which is activated by binding of small GTPases such as CDC42 to an N-terminal regulatory domain. PAK1IP1 also binds to the N-terminus of PAK1, and inhibits the specific activation of PAK1 by CDC42. May be involved in ribosomal large subunit assembly. The protein is p21-activated protein kinase-interacting protein 1-like (pak1ip1) of Xenopus laevis (African clawed frog).